The primary structure comprises 150 residues: UPF0178 protein ECA0873 (150 aa).

Belongs to the UPF0178 family.

The sequence is that of UPF0178 protein ECA0873 from Pectobacterium atrosepticum (strain SCRI 1043 / ATCC BAA-672) (Erwinia carotovora subsp. atroseptica).